The sequence spans 507 residues: Cytochrome P450 4A14 (507 aa).

A propeptide spans 1 to 4 (MGFS) (removed in mature form). Heme is bound at residue Glu318. Phosphoserine is present on Ser437. Position 454 (Cys454) interacts with heme.

Belongs to the cytochrome P450 family. Requires heme as cofactor.

It localises to the endoplasmic reticulum membrane. The protein resides in the microsome membrane. The enzyme catalyses an omega-methyl-long-chain fatty acid + reduced [NADPH--hemoprotein reductase] + O2 = an omega-hydroxy-long-chain fatty acid + oxidized [NADPH--hemoprotein reductase] + H2O + H(+). It catalyses the reaction dodecanoate + reduced [NADPH--hemoprotein reductase] + O2 = (11R)-hydroxydodecanoate + oxidized [NADPH--hemoprotein reductase] + H2O + H(+). It carries out the reaction dodecanoate + reduced [NADPH--hemoprotein reductase] + O2 = 12-hydroxydodecanoate + oxidized [NADPH--hemoprotein reductase] + H2O + H(+). The catalysed reaction is tetradecanoate + reduced [NADPH--hemoprotein reductase] + O2 = 14-hydroxytetradecanoate + oxidized [NADPH--hemoprotein reductase] + H2O + H(+). It functions in the pathway lipid metabolism; fatty acid metabolism. In terms of biological role, a cytochrome P450 monooxygenase that catalyzes omega and omega-1 hydroxylation of saturated fatty acids. Exhibits preferential omega versus omega-1 regioselectivity and (R) versus (S) stereoselectivity for hydroxylation of dodecanoic (lauric) acid. Mechanistically, uses molecular oxygen inserting one oxygen atom into a substrate, and reducing the second into a water molecule, with two electrons provided by NADPH via cytochrome P450 reductase (CPR; NADPH-ferrihemoprotein reductase). This chain is Cytochrome P450 4A14, found in Rattus norvegicus (Rat).